Here is a 373-residue protein sequence, read N- to C-terminus: CCA-adding enzyme (373 aa).

Glycine 8 and arginine 11 together coordinate ATP. Residues glycine 8 and arginine 11 each contribute to the CTP site. 2 residues coordinate Mg(2+): aspartate 21 and aspartate 23. ATP is bound by residues arginine 91, arginine 137, and arginine 140. Positions 91, 137, and 140 each coordinate CTP.

Belongs to the tRNA nucleotidyltransferase/poly(A) polymerase family. Bacterial CCA-adding enzyme type 2 subfamily. Requires Mg(2+) as cofactor.

The enzyme catalyses a tRNA precursor + 2 CTP + ATP = a tRNA with a 3' CCA end + 3 diphosphate. It carries out the reaction a tRNA with a 3' CCA end + 2 CTP + ATP = a tRNA with a 3' CCACCA end + 3 diphosphate. Functionally, catalyzes the addition and repair of the essential 3'-terminal CCA sequence in tRNAs without using a nucleic acid template. Adds these three nucleotides in the order of C, C, and A to the tRNA nucleotide-73, using CTP and ATP as substrates and producing inorganic pyrophosphate. tRNA 3'-terminal CCA addition is required both for tRNA processing and repair. Also involved in tRNA surveillance by mediating tandem CCA addition to generate a CCACCA at the 3' terminus of unstable tRNAs. While stable tRNAs receive only 3'-terminal CCA, unstable tRNAs are marked with CCACCA and rapidly degraded. The protein is CCA-adding enzyme of Marinobacter nauticus (strain ATCC 700491 / DSM 11845 / VT8) (Marinobacter aquaeolei).